The sequence spans 73 residues: Large ribosomal subunit protein bL31 (73 aa).

The protein belongs to the bacterial ribosomal protein bL31 family. Type A subfamily. As to quaternary structure, part of the 50S ribosomal subunit.

Functionally, binds the 23S rRNA. This chain is Large ribosomal subunit protein bL31, found in Bartonella bacilliformis (strain ATCC 35685 / KC583 / Herrer 020/F12,63).